We begin with the raw amino-acid sequence, 80 residues long: Exodeoxyribonuclease 7 small subunit (80 aa).

The protein belongs to the XseB family. As to quaternary structure, heterooligomer composed of large and small subunits.

The protein localises to the cytoplasm. It carries out the reaction Exonucleolytic cleavage in either 5'- to 3'- or 3'- to 5'-direction to yield nucleoside 5'-phosphates.. Functionally, bidirectionally degrades single-stranded DNA into large acid-insoluble oligonucleotides, which are then degraded further into small acid-soluble oligonucleotides. The sequence is that of Exodeoxyribonuclease 7 small subunit from Streptomyces avermitilis (strain ATCC 31267 / DSM 46492 / JCM 5070 / NBRC 14893 / NCIMB 12804 / NRRL 8165 / MA-4680).